The chain runs to 374 residues: 3-isopropylmalate dehydrogenase (374 aa).

83–96 (GPKWDNLPPEIRPE) serves as a coordination point for NAD(+). R104, R114, R142, and D231 together coordinate substrate. Mg(2+) is bound by residues D231, D255, and D259. 288–300 (GSAPDIAGQNKAN) provides a ligand contact to NAD(+).

Belongs to the isocitrate and isopropylmalate dehydrogenases family. LeuB type 1 subfamily. Homodimer. Mg(2+) serves as cofactor. Mn(2+) is required as a cofactor.

It localises to the cytoplasm. The enzyme catalyses (2R,3S)-3-isopropylmalate + NAD(+) = 4-methyl-2-oxopentanoate + CO2 + NADH. The protein operates within amino-acid biosynthesis; L-leucine biosynthesis; L-leucine from 3-methyl-2-oxobutanoate: step 3/4. Its function is as follows. Catalyzes the oxidation of 3-carboxy-2-hydroxy-4-methylpentanoate (3-isopropylmalate) to 3-carboxy-4-methyl-2-oxopentanoate. The product decarboxylates to 4-methyl-2 oxopentanoate. This chain is 3-isopropylmalate dehydrogenase, found in Carboxydothermus hydrogenoformans (strain ATCC BAA-161 / DSM 6008 / Z-2901).